A 311-amino-acid chain; its full sequence is Malate dehydrogenase (311 aa).

NAD(+) is bound by residues 7-13 (GAAGGIG) and Asp34. Residues Arg81 and Arg87 each contribute to the substrate site. NAD(+)-binding positions include Asn94 and 117-119 (ITN). Residues Asn119 and Arg153 each coordinate substrate. The active-site Proton acceptor is His177. Met227 lines the NAD(+) pocket.

The protein belongs to the LDH/MDH superfamily. MDH type 1 family. In terms of assembly, homodimer.

It catalyses the reaction (S)-malate + NAD(+) = oxaloacetate + NADH + H(+). Functionally, catalyzes the reversible oxidation of malate to oxaloacetate. The protein is Malate dehydrogenase of Colwellia psychrerythraea (strain 34H / ATCC BAA-681) (Vibrio psychroerythus).